The chain runs to 100 residues: NADH-quinone oxidoreductase subunit K (100 aa).

A run of 3 helical transmembrane segments spans residues T4 to I24, L29 to F49, and I60 to L80.

It belongs to the complex I subunit 4L family. In terms of assembly, NDH-1 is composed of 14 different subunits. Subunits NuoA, H, J, K, L, M, N constitute the membrane sector of the complex.

It is found in the cell membrane. The catalysed reaction is a quinone + NADH + 5 H(+)(in) = a quinol + NAD(+) + 4 H(+)(out). NDH-1 shuttles electrons from NADH, via FMN and iron-sulfur (Fe-S) centers, to quinones in the respiratory chain. The immediate electron acceptor for the enzyme in this species is believed to be ubiquinone. Couples the redox reaction to proton translocation (for every two electrons transferred, four hydrogen ions are translocated across the cytoplasmic membrane), and thus conserves the redox energy in a proton gradient. This chain is NADH-quinone oxidoreductase subunit K, found in Roseiflexus sp. (strain RS-1).